Consider the following 99-residue polypeptide: NADH-quinone oxidoreductase subunit K (99 aa).

3 consecutive transmembrane segments (helical) span residues 3 to 23, 28 to 48, and 59 to 79; these read PANY…GVLL, IVMF…FVTF, and MIAF…LAII.

This sequence belongs to the complex I subunit 4L family. As to quaternary structure, NDH-1 is composed of 14 different subunits. Subunits NuoA, H, J, K, L, M, N constitute the membrane sector of the complex.

The protein resides in the cell membrane. It catalyses the reaction a quinone + NADH + 5 H(+)(in) = a quinol + NAD(+) + 4 H(+)(out). NDH-1 shuttles electrons from NADH, via FMN and iron-sulfur (Fe-S) centers, to quinones in the respiratory chain. The immediate electron acceptor for the enzyme in this species is believed to be a menaquinone. Couples the redox reaction to proton translocation (for every two electrons transferred, four hydrogen ions are translocated across the cytoplasmic membrane), and thus conserves the redox energy in a proton gradient. The polypeptide is NADH-quinone oxidoreductase subunit K (Mycobacterium marinum (strain ATCC BAA-535 / M)).